A 356-amino-acid chain; its full sequence is Cyanide hydratase (356 aa).

One can recognise a CN hydrolase domain in the interval 8–287; that stretch reads YKAAAVNAEP…EGLLFVDIDL (280 aa). E48 functions as the Proton acceptor in the catalytic mechanism. K130 is an active-site residue. C165 functions as the Nucleophile in the catalytic mechanism.

This sequence belongs to the carbon-nitrogen hydrolase superfamily. Nitrilase family. In terms of assembly, oligomer of dimers, forming left-handed helical fibers.

The enzyme catalyses formamide = hydrogen cyanide + H2O. In terms of biological role, catalyzes the hydration of cyanide to formamide. Degradation of cyanide may be important for plant pathogenic fungi in infection of cyanogenic plants. Can also transform some nitriles like 2-cyanopyridine and fumaronitrile. In Aspergillus niger, this protein is Cyanide hydratase.